The following is a 327-amino-acid chain: COP9 signalosome complex subunit 7 (327 aa).

A PCI domain is found at 4 to 165 (VHHRALDALQ…NPPTVNVTSV (162 aa)). Disordered stretches follow at residues 233–260 (GGEQ…AGWK) and 276–327 (GGSN…GKKS). Over residues 236 to 255 (QLQGGNPGQGQGQGQGGLGK) the composition is skewed to gly residues. Over residues 315 to 327 (GARHSKRFLGKKS) the composition is skewed to basic residues.

Belongs to the CSN7/EIF3M family. CSN7 subfamily. In terms of assembly, component of the COP9 signalosome (CSN) complex. As to expression, present in uninduced vegetative hyphae, induced conidiating cultures and in both conidiospores and ascospores.

It is found in the cytoplasm. Its subcellular location is the nucleus. Its function is as follows. Component of the COP9 signalosome (CSN) complex that acts as an regulator of the ubiquitin (Ubl) conjugation pathway by mediating the deneddylation of the cullin subunit of SCF-type E3 ubiquitin-protein ligase complexes. The CSN complex seems to link protein degradation to sexual development. May be required for sporulation only at elevated temperatures. The polypeptide is COP9 signalosome complex subunit 7 (csnG) (Emericella nidulans (strain FGSC A4 / ATCC 38163 / CBS 112.46 / NRRL 194 / M139) (Aspergillus nidulans)).